The following is a 279-amino-acid chain: uncharacterized protein (279 aa).

The segment at 1–28 is disordered; it reads MGLFGGGNSKSTSNQTTNNENTNIATQG. Low complexity predominate over residues 9-23; the sequence is SKSTSNQTTNNENTN. A helical membrane pass occupies residues 256 to 273; sequence KTLMIGIVAVSAAVGLYA.

It is found in the host membrane. This is an uncharacterized protein from Pseudoalteromonas espejiana (Bacteriophage PM2).